The chain runs to 751 residues: Translation initiation factor IF-2, chloroplastic (751 aa).

Positions 86–156 are disordered; sequence KKEKSKFRKD…KSKKQTSAKN (71 aa). A compositionally biased stretch (basic and acidic residues) spans 93-106; sequence RKDEDYDSLKREDN. The span at 129 to 143 shows a compositional bias: low complexity; it reads VSNTNTLNKKNVVKS. Residues 250–423 enclose the tr-type G domain; the sequence is KRPPVIAIMG…ILVSEIEDLK (174 aa). Residues 259-266 form a G1 region; that stretch reads GHVDHGKT. GTP is bound at residue 259–266; the sequence is GHVDHGKT. Residues 284–288 are G2; that stretch reads GITQK. Positions 309-312 are G3; the sequence is DTPG. Residues 309–313 and 363–366 each bind GTP; these read DTPGH and NKID. The tract at residues 363-366 is G4; that stretch reads NKID. The interval 399 to 401 is G5; that stretch reads SAM.

This sequence belongs to the TRAFAC class translation factor GTPase superfamily. Classic translation factor GTPase family. IF-2 subfamily.

It localises to the plastid. It is found in the chloroplast. One of the essential components for the initiation of protein synthesis. Protects formylmethionyl-tRNA from spontaneous hydrolysis and promotes its binding to the 30S ribosomal subunits. Also involved in the hydrolysis of GTP during the formation of the 70S ribosomal complex. The protein is Translation initiation factor IF-2, chloroplastic (infB) of Rhodomonas salina (Cryptomonas salina).